Here is a 142-residue protein sequence, read N- to C-terminus: UPF0102 protein Synpcc7942_0312 (142 aa).

This sequence belongs to the UPF0102 family.

The polypeptide is UPF0102 protein Synpcc7942_0312 (Synechococcus elongatus (strain ATCC 33912 / PCC 7942 / FACHB-805) (Anacystis nidulans R2)).